We begin with the raw amino-acid sequence, 309 residues long: tRNA dimethylallyltransferase (309 aa).

9–16 (GPTAVGKT) is an ATP binding site. 11–16 (TAVGKT) lines the substrate pocket. The segment at 34–37 (DSMQ) is interaction with substrate tRNA.

Belongs to the IPP transferase family. Monomer. It depends on Mg(2+) as a cofactor.

The enzyme catalyses adenosine(37) in tRNA + dimethylallyl diphosphate = N(6)-dimethylallyladenosine(37) in tRNA + diphosphate. In terms of biological role, catalyzes the transfer of a dimethylallyl group onto the adenine at position 37 in tRNAs that read codons beginning with uridine, leading to the formation of N6-(dimethylallyl)adenosine (i(6)A). This Clostridium kluyveri (strain NBRC 12016) protein is tRNA dimethylallyltransferase.